The chain runs to 94 residues: Small ribosomal subunit protein bS6 (94 aa).

The protein belongs to the bacterial ribosomal protein bS6 family.

Its function is as follows. Binds together with bS18 to 16S ribosomal RNA. The sequence is that of Small ribosomal subunit protein bS6 from Phytoplasma mali (strain AT).